The following is a 915-amino-acid chain: Pentatricopeptide repeat-containing protein At5g65560 (915 aa).

PPR repeat units follow at residues 182 to 216, 217 to 251, 252 to 286, 287 to 321, 322 to 356, 357 to 391, 392 to 426, 427 to 460, 461 to 495, 496 to 530, 531 to 565, 566 to 600, 601 to 635, 636 to 670, 671 to 705, 724 to 758, 759 to 794, 795 to 829, 830 to 864, and 865 to 899; these read IIGC…KVCP, NIYT…GLDP, DFFT…GCRR, NEVA…ECFP, TVRT…GIKP, NIHT…GLMP, NVIT…KLSP, NTRT…KVLP, DVVT…GLVP, DQWT…GVNP, NVVM…NCLP, NSLT…GLQP, TVST…GTKP, DAHT…GVSP, DLFT…GCEP, KQKG…SVTP, NAKS…GISP, SELV…GHLP, QLES…GYYE, and DELA…GCKF.

It belongs to the PPR family. P subfamily.

In Arabidopsis thaliana (Mouse-ear cress), this protein is Pentatricopeptide repeat-containing protein At5g65560.